Here is a 185-residue protein sequence, read N- to C-terminus: ADP-ribose 1''-phosphate phosphatase (185 aa).

The region spanning 1 to 185 (MSPARLRITD…VVEVVAWERA (185 aa)) is the Macro domain. Substrate contacts are provided by residues 13–15 (GDL), 27–29 (ACN), 34–39 (WGGGIA), and 142–148 (INAGLFA).

The protein belongs to the POA1 family.

It carries out the reaction ADP-alpha-D-ribose 1''-phosphate + H2O = ADP-D-ribose + phosphate. Functionally, highly specific phosphatase involved in the metabolism of ADP-ribose 1''-phosphate (Appr1p) which is produced as a consequence of tRNA splicing. The chain is ADP-ribose 1''-phosphate phosphatase (POA1) from Chaetomium globosum (strain ATCC 6205 / CBS 148.51 / DSM 1962 / NBRC 6347 / NRRL 1970) (Soil fungus).